Here is a 509-residue protein sequence, read N- to C-terminus: Proto-oncogene tyrosine-protein kinase LCK (509 aa).

Glycine 2 carries N-myristoyl glycine lipidation. Residues 2 to 72 (GCGCSSHLED…DNLVIALHSY (71 aa)) form an interactions with CD4 and CD8 region. Residues cysteine 3 and cysteine 5 are each lipidated (S-palmitoyl cysteine). Residues 61–121 (LQDNLVIALH…PFNFVAKANS (61 aa)) enclose the SH3 domain. Residue lysine 99 forms a Glycyl lysine isopeptide (Lys-Gly) (interchain with G-Cter in ubiquitin) linkage. Residue serine 102 is modified to Phosphoserine. One can recognise an SH2 domain in the interval 127-224 (WFFKNLSRKD…GLCTRLSRPC (98 aa)). Residues 154–242 (RESESTAGSF…WWEDEWEVPR (89 aa)) are interaction with PTPRH. Threonine 159 bears the Phosphothreonine mark. Position 162 is a phosphoserine (serine 162). The residue at position 192 (tyrosine 192) is a Phosphotyrosine. At serine 194 the chain carries Phosphoserine. The 254-residue stretch at 245–498 (LKLVERLGAG…YLRSVLEDFF (254 aa)) folds into the Protein kinase domain. Residues 251–259 (LGAGQFGEV) and lysine 273 each bind ATP. Lysine 276 participates in a covalent cross-link: Glycyl lysine isopeptide (Lys-Gly) (interchain with G-Cter in ubiquitin). Catalysis depends on aspartate 364, which acts as the Proton acceptor. Tyrosine 394 is subject to Phosphotyrosine; by autocatalysis. Tyrosine 505 is subject to Phosphotyrosine; by CSK.

The protein belongs to the protein kinase superfamily. Tyr protein kinase family. As to quaternary structure, binds to the cytoplasmic domain of cell surface receptors, such as AXL, CD2, CD4, CD5, CD8, CD44, CD45 and CD122. Also binds to effector molecules, such as PI4K, VAV1, RASA1, FYB1 and to other protein kinases including CDK1, RAF1, ZAP70 and SYK. Binds to phosphatidylinositol 3'-kinase (PI3K) from T-lymphocytes through its SH3 domain and to the tyrosine phosphorylated form of KHDRBS1/p70 through its SH2 domain. Interacts with SQSTM1. Interacts with phosphorylated LIME1. Interacts with CBLB and PTPRH. Interacts with RUNX3. Forms a signaling complex with EPHA1, PTK2B and PI3-KINASE; upon activation by EFNA1 which may regulate T-lymphocytes migration. Associates with ZAP70 and RHOH; these interactions allow LCK-mediated RHOH and CD3 subunit phosphorylations in the presence of functional ZAP70. Interacts with Saimiriine herpesvirus 2 TIP. Interacts with UNC119; this interaction plays a crucial role in activation of LCK. Interacts with CEACAM1 (via cytoplasmic domain); mediates CEACAM1 phosphorylation resulting in PTPN6 recruitment that dephosphorylates TCR stimulation-induced CD247 and ZAP70. Interacts with CD160. Interacts with CD48. Post-translationally, autophosphorylated on Tyr-394, increasing enzymatic activity, this site is dephosphorylated by PTN22. Phosphorylated on Tyr-505 by CSK, decreasing activity. Dephosphorylated by PTPRC/CD45. Dephosphorylation at Tyr-394 by PTPN2 negatively regulates T-cells differentiation. Dephosphorylation at Tyr-394 by DUSP22 negatively regulates T-cell receptor signaling. Myristoylation is required prior to palmitoylation. In terms of processing, palmitoylation regulates association with the plasma membrane and could be mediated by ZDHHC2. Post-translationally, 'Lys-63'-linked ubiquitinated at Lys-99 and Lys-276 by UBR2; this modification is required for autophosphorylation at Tyr-394. Expressed specifically in lymphoid cells.

It localises to the cell membrane. It is found in the cytoplasm. Its subcellular location is the cytosol. The catalysed reaction is L-tyrosyl-[protein] + ATP = O-phospho-L-tyrosyl-[protein] + ADP + H(+). With respect to regulation, the relative activities of the inhibitory tyrosine-protein kinase CSK and the activating tyrosine-protein phosphatase PTPRC/CD45 determine the level of LCK activity. These interactions allow rapid and efficient activation of LCK in response to TCR stimulation. Non-receptor tyrosine-protein kinase that plays an essential role in the selection and maturation of developing T-cells in the thymus and in the function of mature T-cells. Plays a key role in T-cell antigen receptor (TCR)-linked signal transduction pathways. Constitutively associated with the cytoplasmic portions of the CD4 and CD8 surface receptors. Association of the TCR with a peptide antigen-bound MHC complex facilitates the interaction of CD4 and CD8 with MHC class II and class I molecules, respectively, thereby recruiting the associated LCK protein to the vicinity of the TCR/CD3 complex. LCK then phosphorylates tyrosine residues within the immunoreceptor tyrosine-based activation motifs (ITAM) of the cytoplasmic tails of the TCR-gamma chains and CD3 subunits, initiating the TCR/CD3 signaling pathway. Once stimulated, the TCR recruits the tyrosine kinase ZAP70, that becomes phosphorylated and activated by LCK. Following this, a large number of signaling molecules are recruited, ultimately leading to lymphokine production. LCK also contributes to signaling by other receptor molecules. Associates directly with the cytoplasmic tail of CD2, which leads to hyperphosphorylation and activation of LCK. Also plays a role in the IL2 receptor-linked signaling pathway that controls the T-cell proliferative response. Binding of IL2 to its receptor results in increased activity of LCK. Is expressed at all stages of thymocyte development and is required for the regulation of maturation events that are governed by both pre-TCR and mature alpha beta TCR. Phosphorylates other substrates including RUNX3, PTK2B/PYK2, the microtubule-associated protein MAPT, RHOH or TYROBP. This is Proto-oncogene tyrosine-protein kinase LCK (LCK) from Saimiri sciureus (Common squirrel monkey).